Here is a 294-residue protein sequence, read N- to C-terminus: Cytidine deaminase (294 aa).

CMP/dCMP-type deaminase domains are found at residues 49–169 (TPQQ…FGPA) and 188–294 (ETQD…YIAL). 90 to 92 (NLE) provides a ligand contact to substrate. A Zn(2+)-binding site is contributed by His103. Glu105 functions as the Proton donor in the catalytic mechanism. Positions 130 and 133 each coordinate Zn(2+).

The protein belongs to the cytidine and deoxycytidylate deaminase family. As to quaternary structure, homodimer. Zn(2+) is required as a cofactor.

The enzyme catalyses cytidine + H2O + H(+) = uridine + NH4(+). The catalysed reaction is 2'-deoxycytidine + H2O + H(+) = 2'-deoxyuridine + NH4(+). Functionally, this enzyme scavenges exogenous and endogenous cytidine and 2'-deoxycytidine for UMP synthesis. In Pasteurella multocida (strain Pm70), this protein is Cytidine deaminase.